Consider the following 374-residue polypeptide: GTPase Obg (374 aa).

The 159-residue stretch at 1–159 (MKFIDEVRIH…RDLRLELRLL (159 aa)) folds into the Obg domain. The region spanning 160-333 (ADVGLLGLPN…LVYAIWQALP (174 aa)) is the OBG-type G domain. GTP contacts are provided by residues 166–173 (GLPNAGKS), 191–195 (FTTLY), 213–216 (DIPG), 283–286 (NKSD), and 314–316 (SAA). Residues S173 and T193 each coordinate Mg(2+). The tract at residues 337-374 (PAADPTQTEDWGDESDAGERLENWEGDDLDADWEEEQV) is disordered. Over residues 360-374 (WEGDDLDADWEEEQV) the composition is skewed to acidic residues.

Belongs to the TRAFAC class OBG-HflX-like GTPase superfamily. OBG GTPase family. Monomer. It depends on Mg(2+) as a cofactor.

It is found in the cytoplasm. Functionally, an essential GTPase which binds GTP, GDP and possibly (p)ppGpp with moderate affinity, with high nucleotide exchange rates and a fairly low GTP hydrolysis rate. Plays a role in control of the cell cycle, stress response, ribosome biogenesis and in those bacteria that undergo differentiation, in morphogenesis control. In Acidithiobacillus ferrooxidans (strain ATCC 23270 / DSM 14882 / CIP 104768 / NCIMB 8455) (Ferrobacillus ferrooxidans (strain ATCC 23270)), this protein is GTPase Obg.